The following is a 378-amino-acid chain: Carbamoyl phosphate synthase small chain (378 aa).

The segment at methionine 1–asparagine 188 is CPSase. Residues serine 49, glycine 244, and glycine 246 each coordinate L-glutamine. The region spanning lysine 192 to lysine 378 is the Glutamine amidotransferase type-1 domain. The Nucleophile role is filled by cysteine 272. Positions 273, 276, 314, and 317 each coordinate L-glutamine. Residues histidine 355 and glutamate 357 contribute to the active site.

This sequence belongs to the CarA family. As to quaternary structure, composed of two chains; the small (or glutamine) chain promotes the hydrolysis of glutamine to ammonia, which is used by the large (or ammonia) chain to synthesize carbamoyl phosphate. Tetramer of heterodimers (alpha,beta)4.

The catalysed reaction is hydrogencarbonate + L-glutamine + 2 ATP + H2O = carbamoyl phosphate + L-glutamate + 2 ADP + phosphate + 2 H(+). It catalyses the reaction L-glutamine + H2O = L-glutamate + NH4(+). Its pathway is amino-acid biosynthesis; L-arginine biosynthesis; carbamoyl phosphate from bicarbonate: step 1/1. The protein operates within pyrimidine metabolism; UMP biosynthesis via de novo pathway; (S)-dihydroorotate from bicarbonate: step 1/3. Its function is as follows. Small subunit of the glutamine-dependent carbamoyl phosphate synthetase (CPSase). CPSase catalyzes the formation of carbamoyl phosphate from the ammonia moiety of glutamine, carbonate, and phosphate donated by ATP, constituting the first step of 2 biosynthetic pathways, one leading to arginine and/or urea and the other to pyrimidine nucleotides. The small subunit (glutamine amidotransferase) binds and cleaves glutamine to supply the large subunit with the substrate ammonia. This Helicobacter hepaticus (strain ATCC 51449 / 3B1) protein is Carbamoyl phosphate synthase small chain.